A 355-amino-acid polypeptide reads, in one-letter code: Ribosomal RNA large subunit methyltransferase M (355 aa).

Residues S191, 224-227 (APGG), D243, D263, and D279 contribute to the S-adenosyl-L-methionine site. K308 serves as the catalytic Proton acceptor.

It belongs to the class I-like SAM-binding methyltransferase superfamily. RNA methyltransferase RlmE family. RlmM subfamily. Monomer.

It localises to the cytoplasm. It catalyses the reaction cytidine(2498) in 23S rRNA + S-adenosyl-L-methionine = 2'-O-methylcytidine(2498) in 23S rRNA + S-adenosyl-L-homocysteine + H(+). In terms of biological role, catalyzes the 2'-O-methylation at nucleotide C2498 in 23S rRNA. This Stenotrophomonas maltophilia (strain R551-3) protein is Ribosomal RNA large subunit methyltransferase M.